We begin with the raw amino-acid sequence, 326 residues long: N-acetyl-gamma-glutamyl-phosphate reductase (326 aa).

Residue Cys-155 is part of the active site.

This sequence belongs to the NAGSA dehydrogenase family. Type 1 subfamily.

The protein localises to the cytoplasm. It catalyses the reaction N-acetyl-L-glutamate 5-semialdehyde + phosphate + NADP(+) = N-acetyl-L-glutamyl 5-phosphate + NADPH + H(+). It functions in the pathway amino-acid biosynthesis; L-arginine biosynthesis; N(2)-acetyl-L-ornithine from L-glutamate: step 3/4. Catalyzes the NADPH-dependent reduction of N-acetyl-5-glutamyl phosphate to yield N-acetyl-L-glutamate 5-semialdehyde. This chain is N-acetyl-gamma-glutamyl-phosphate reductase, found in Shewanella baltica (strain OS155 / ATCC BAA-1091).